The chain runs to 215 residues: Thiamine-phosphate synthase (215 aa).

Residues 37 to 41 (QLRIK) and N69 each bind 4-amino-2-methyl-5-(diphosphooxymethyl)pyrimidine. Positions 70 and 89 each coordinate Mg(2+). S108 contributes to the 4-amino-2-methyl-5-(diphosphooxymethyl)pyrimidine binding site. Residue 134-136 (TQT) coordinates 2-[(2R,5Z)-2-carboxy-4-methylthiazol-5(2H)-ylidene]ethyl phosphate. K137 is a binding site for 4-amino-2-methyl-5-(diphosphooxymethyl)pyrimidine. Residues G166 and 186–187 (VS) contribute to the 2-[(2R,5Z)-2-carboxy-4-methylthiazol-5(2H)-ylidene]ethyl phosphate site.

It belongs to the thiamine-phosphate synthase family. Requires Mg(2+) as cofactor.

The catalysed reaction is 2-[(2R,5Z)-2-carboxy-4-methylthiazol-5(2H)-ylidene]ethyl phosphate + 4-amino-2-methyl-5-(diphosphooxymethyl)pyrimidine + 2 H(+) = thiamine phosphate + CO2 + diphosphate. The enzyme catalyses 2-(2-carboxy-4-methylthiazol-5-yl)ethyl phosphate + 4-amino-2-methyl-5-(diphosphooxymethyl)pyrimidine + 2 H(+) = thiamine phosphate + CO2 + diphosphate. It carries out the reaction 4-methyl-5-(2-phosphooxyethyl)-thiazole + 4-amino-2-methyl-5-(diphosphooxymethyl)pyrimidine + H(+) = thiamine phosphate + diphosphate. The protein operates within cofactor biosynthesis; thiamine diphosphate biosynthesis; thiamine phosphate from 4-amino-2-methyl-5-diphosphomethylpyrimidine and 4-methyl-5-(2-phosphoethyl)-thiazole: step 1/1. Condenses 4-methyl-5-(beta-hydroxyethyl)thiazole monophosphate (THZ-P) and 2-methyl-4-amino-5-hydroxymethyl pyrimidine pyrophosphate (HMP-PP) to form thiamine monophosphate (TMP). This is Thiamine-phosphate synthase from Yersinia pestis (strain Pestoides F).